The primary structure comprises 500 residues: Cytochrome P450 71B36 (500 aa).

A helical membrane pass occupies residues 1 to 21 (MATILFLSLLFLSCILLAAFT). Cysteine 440 contributes to the heme binding site.

The protein belongs to the cytochrome P450 family. Heme serves as cofactor.

The protein resides in the membrane. The sequence is that of Cytochrome P450 71B36 (CYP71B36) from Arabidopsis thaliana (Mouse-ear cress).